Here is a 132-residue protein sequence, read N- to C-terminus: Small ribosomal subunit protein uS8 (132 aa).

The protein belongs to the universal ribosomal protein uS8 family. Part of the 30S ribosomal subunit. Contacts proteins S5 and S12.

Its function is as follows. One of the primary rRNA binding proteins, it binds directly to 16S rRNA central domain where it helps coordinate assembly of the platform of the 30S subunit. This chain is Small ribosomal subunit protein uS8, found in Beijerinckia indica subsp. indica (strain ATCC 9039 / DSM 1715 / NCIMB 8712).